The primary structure comprises 148 residues: Large ribosomal subunit protein uL15 (148 aa).

The span at 1–30 (MPSRLRKTRKLRGHVSHGHGRIGKHRKHPG) shows a compositional bias: basic residues. The tract at residues 1-39 (MPSRLRKTRKLRGHVSHGHGRIGKHRKHPGGRGNAGGLH) is disordered. The residue at position 39 (H39) is a (3S)-3-hydroxyhistidine. N6-acetyllysine is present on residues K47 and K55. The residue at position 68 (S68) is a Phosphoserine. Residue K110 is modified to N6-acetyllysine.

It belongs to the universal ribosomal protein uL15 family. As to quaternary structure, component of the large ribosomal subunit. Hydroxylated on His-39 by MINA.

The protein localises to the cytoplasm. Its function is as follows. Component of the large ribosomal subunit. The ribosome is a large ribonucleoprotein complex responsible for the synthesis of proteins in the cell. In Macaca fascicularis (Crab-eating macaque), this protein is Large ribosomal subunit protein uL15 (RPL27A).